Consider the following 476-residue polypeptide: FAD-dependent monooxygenase prhF (476 aa).

FAD is bound by residues E41, G55, and R114. Residue Y222 is part of the active site. D314 and A327 together coordinate FAD. N-linked (GlcNAc...) asparagine glycosylation occurs at N343. Residues 447-467 (LGSTPIQMLTLLLPCLFYFMY) traverse the membrane as a helical segment. An N-linked (GlcNAc...) asparagine glycan is attached at N471.

It belongs to the paxM FAD-dependent monooxygenase family. It depends on FAD as a cofactor.

It localises to the membrane. The protein operates within secondary metabolite biosynthesis; terpenoid biosynthesis. Functionally, FAD-dependent monooxygenase; part of the gene cluster that mediates the biosynthesis of paraherquonin, a meroterpenoid with a unique, highly congested hexacyclic molecular architecture. The first step of the pathway is the synthesis of 3,5-dimethylorsellinic acid (DMOA) by the polyketide synthase prhL. Synthesis of DMOA is followed by farnesylation by the prenyltransferase prhE, methylesterification by the methyl-transferase prhM, epoxidation of the prenyl chain by the flavin-dependent monooxygenase prhF, and cyclization of the farnesyl moiety by the terpene cyclase prhH, to yield the tetracyclic intermediate, protoaustinoid A. The short chain dehydrogenase prhI then oxidizes the C-3 alcohol group of the terpene cyclase product to transform protoaustinoid A into protoaustinoid B. The FAD-binding monooxygenase prhJ catalyzes the oxidation of protoaustinoid B into preaustinoid A which is further oxidized into preaustinoid A1 by FAD-binding monooxygenase phrK. Finally, prhA leads to berkeleydione via the berkeleyone B intermediate. PrhA is a multifunctional dioxygenase that first desaturates at C5-C6 to form berkeleyone B, followed by rearrangement of the A/B-ring to form the cycloheptadiene moiety in berkeleydione. Berkeleydione serves as the key intermediate for the biosynthesis of paraherquonin as well as many other meroterpenoids. The cytochrome P450 monooxygenases prhB, prhD, and prhN, as well as the isomerase prhC, are probably involved in the late stage of paraherquonin biosynthesis, after the production of berkeleydione. Especially prhC might be a multifunctional enzyme that catalyzes the D-ring expansion via intramolecular methoxy rearrangement, as well as the hydrolysis of the expanded D-ring. This chain is FAD-dependent monooxygenase prhF, found in Penicillium brasilianum.